Reading from the N-terminus, the 191-residue chain is Small ribosomal subunit protein uS4A (191 aa).

Residues Ser50 and Ser161 each carry the phosphoserine modification. The region spanning 107–181 (RRLQTQVFKL…CKRKRLRSQE (75 aa)) is the S4 RNA-binding domain. Tyr164 carries the phosphotyrosine modification. Residues 166–191 (GGRPGRCKRKRLRSQEGGEGEEAEEE) are disordered. Ser179 carries the phosphoserine modification.

The protein belongs to the universal ribosomal protein uS4 family. In terms of assembly, component of the small ribosomal subunit (SSU). Mature yeast ribosomes consist of a small (40S) and a large (60S) subunit. The 40S small subunit contains 1 molecule of ribosomal RNA (18S rRNA) and at least 33 different proteins. The large 60S subunit contains 3 rRNA molecules (25S, 5.8S and 5S rRNA) and at least 46 different proteins. Interacts with snoRNA U3. uS11 interacts with MPP10. Component of the ribosomal small subunit (SSU) processome composed of at least 40 protein subunits and snoRNA U3.

It localises to the cytoplasm. In terms of biological role, component of the ribosome, a large ribonucleoprotein complex responsible for the synthesis of proteins in the cell. The small ribosomal subunit (SSU) binds messenger RNAs (mRNAs) and translates the encoded message by selecting cognate aminoacyl-transfer RNA (tRNA) molecules. The large subunit (LSU) contains the ribosomal catalytic site termed the peptidyl transferase center (PTC), which catalyzes the formation of peptide bonds, thereby polymerizing the amino acids delivered by tRNAs into a polypeptide chain. The nascent polypeptides leave the ribosome through a tunnel in the LSU and interact with protein factors that function in enzymatic processing, targeting, and the membrane insertion of nascent chains at the exit of the ribosomal tunnel. uS4 is involved in nucleolar processing of pre-18S ribosomal RNA and ribosome assembly. In Schizosaccharomyces pombe (strain 972 / ATCC 24843) (Fission yeast), this protein is Small ribosomal subunit protein uS4A (rps901).